We begin with the raw amino-acid sequence, 570 residues long: Structure-specific endonuclease subunit EME1 (570 aa).

Low complexity predominate over residues 1–12; the sequence is MALKKSSPSLDS. A disordered region spans residues 1–42; it reads MALKKSSPSLDSGDSDSEELPTFAFLKKEPSSTKRRQPEREE. Ser-12 and Ser-15 each carry phosphoserine. A compositionally biased stretch (basic and acidic residues) spans 26-42; the sequence is LKKEPSSTKRRQPEREE. Phosphoserine occurs at positions 84, 85, and 87. Residue Lys-103 forms a Glycyl lysine isopeptide (Lys-Gly) (interchain with G-Cter in SUMO2) linkage. Phosphoserine is present on residues Ser-111 and Ser-117. Glycyl lysine isopeptide (Lys-Gly) (interchain with G-Cter in SUMO2) cross-links involve residues Lys-136 and Lys-141. Thr-150 carries the post-translational modification Phosphothreonine. 2 disordered regions span residues 187–233 and 372–400; these read KTNS…ERKN and AQNP…ASIG. Residues 220–233 are compositionally biased toward basic and acidic residues; sequence RQKESTLRRQERKN. A nuclease-like domain; forms the post-nick DNA binding interface and is involved in DNA recognition and bending region spans residues 250-456; it reads KHIIVVLDPV…PFKKLRDETT (207 aa). The helix-hairpin-helix (2HhH); forms the pre-nick DNA binding interface and is involved in DNA recognition and bending stretch occupies residues 476–570; it reads RGLALVWRRQ…QPHLSLDSAD (95 aa).

It belongs to the EME1/MMS4 family. As to quaternary structure, part of the heterodimeric MUS81-EME1 complex.

It localises to the nucleus. The protein resides in the nucleolus. Non-catalytic subunit of the structure-specific, heterodimeric DNA endonuclease MUS81-EME1 which is involved in the maintenance of genome stability. In the complex, EME1 is required for DNA cleavage, participating in DNA recognition and bending. MUS81-EME1 cleaves 3'-flaps and nicked Holliday junctions, and exhibit limited endonuclease activity with 5' flaps and nicked double-stranded DNAs. Active during prometaphase, MUS81-EME1 resolves mitotic recombination intermediates, including Holliday junctions, which form during homologous recombination. This Homo sapiens (Human) protein is Structure-specific endonuclease subunit EME1.